Here is a 480-residue protein sequence, read N- to C-terminus: MKLEPLFNLDPNTKVRTRFAPSPTGYLHVGGARTALYSWLYAKHNQGEFVLRIEDTDLERSTPEATAAILEGMEWLNLAWEHGPYFQTKRFERYNQVIDQMIEQGLAYRCYCTKERLEDLRHSQEQNKQKPRYDRYCLHQSEYPVDAPHVVRFKNPTEGTVVFDDAVRGRIEISNRELDDLIIRRTDGSPTYNFCVVVDDWDMGITHVVRGEDHINNTPRQINILKALGAPIPTYAHVSMINGDDGQKLSKRHGAVSVMQYRDEGYLPEALINYLVRLGWGHGDQEIFSREEMIALFDIHSVSKSASAFNTEKLQWLNQHYIRSLPVEQVATHLEWHMKKHGIDYSNGPNLAEIIPVLSERCKTLKELAISSRYFYQDVENYDEKAVAKNFKPEAIKPLAKLAEKLTALSDWTVENIHEVMSQTAQELDIGMGKVGMPFRLAVTGLGQSPSMDITAKLVGKDRTISRINNAIAFIHTQNV.

Residues 21 to 31 (PSPTGYLHVGG) carry the 'HIGH' region motif. Zn(2+) contacts are provided by Cys-110, Cys-112, Cys-137, and His-139. Positions 248–252 (KLSKR) match the 'KMSKS' region motif. Lys-251 contacts ATP.

It belongs to the class-I aminoacyl-tRNA synthetase family. Glutamate--tRNA ligase type 1 subfamily. Monomer. Zn(2+) is required as a cofactor.

The protein resides in the cytoplasm. It catalyses the reaction tRNA(Glu) + L-glutamate + ATP = L-glutamyl-tRNA(Glu) + AMP + diphosphate. Catalyzes the attachment of glutamate to tRNA(Glu) in a two-step reaction: glutamate is first activated by ATP to form Glu-AMP and then transferred to the acceptor end of tRNA(Glu). The protein is Glutamate--tRNA ligase of Histophilus somni (strain 2336) (Haemophilus somnus).